Here is a 213-residue protein sequence, read N- to C-terminus: Ras-related protein Rab-25 (213 aa).

Ser21, Gly24, Lys25, Thr26, Asn27, Ser38, His39, Thr43, and Thr44 together coordinate GTP. Thr26 is a Mg(2+) binding site. 2 short sequence motifs (switch) span residues 35-49 (NEFS…GVEF) and 67-84 (DTAG…YYRG). Residues Thr44 and Asp67 each contribute to the Mg(2+) site. GTP-binding residues include Gly70, Asn125, Lys126, Asp128, Ala156, and Leu157. Residues Cys209 and Cys210 are each lipidated (S-geranylgeranyl cysteine). Cys210 carries the cysteine methyl ester modification. Residues 211 to 213 (ISL) constitute a propeptide, removed in mature form.

This sequence belongs to the small GTPase superfamily. Rab family. Interacts (GTP-bound form) with RAB11FIP1, RAB11FIP2, RAB11FIP3 and RAB11FIP4. Interacts (via the hypervariable C-terminal region) with ITGB1 (via the cytoplasmic region); the interaction is GTP-dependent. Interacts with ITGAV. Associates with the integrin alpha-V/beta-1 heterodimer. Interacts with VPS33B. Mg(2+) is required as a cofactor.

It is found in the cell membrane. The protein localises to the cell projection. The protein resides in the pseudopodium membrane. It localises to the cytoplasmic vesicle. It catalyses the reaction GTP + H2O = GDP + phosphate + H(+). Regulated by guanine nucleotide exchange factors (GEFs) which promote the exchange of bound GDP for free GTP. Regulated by GTPase activating proteins (GAPs) which increase the GTP hydrolysis activity. Inhibited by GDP dissociation inhibitors (GDIs) which prevent Rab-GDP dissociation. The small GTPases Rab are key regulators of intracellular membrane trafficking, from the formation of transport vesicles to their fusion with membranes. Rabs cycle between an inactive GDP-bound form and an active GTP-bound form that is able to recruit to membranes different set of downstream effectors directly responsible for vesicle formation, movement, tethering and fusion. RAB25 regulates epithelial cell differentiation, proliferation and survival, thereby playing key roles in tumorigenesis. Promotes invasive migration of cells in which it functions to localize and maintain integrin alpha-V/beta-1 at the tips of extending pseudopodia. Involved in the regulation of epithelial morphogenesis through the control of CLDN4 expression and localization at tight junctions. May selectively regulate the apical recycling pathway. Together with MYO5B regulates transcytosis. The sequence is that of Ras-related protein Rab-25 (RAB25) from Canis lupus familiaris (Dog).